The sequence spans 229 residues: V-type proton ATPase subunit E (229 aa).

It belongs to the V-ATPase E subunit family. V-ATPase is a heteromultimeric enzyme composed of a peripheral catalytic V1 complex (components A to H) attached to an integral membrane V0 proton pore complex (components: a, c, c', c'' and d).

Its function is as follows. Subunit of the peripheral V1 complex of vacuolar ATPase essential for assembly or catalytic function. V-ATPase is responsible for acidifying a variety of intracellular compartments in eukaryotic cells. The sequence is that of V-type proton ATPase subunit E (VATE) from Spinacia oleracea (Spinach).